We begin with the raw amino-acid sequence, 157 residues long: Heat shock 22 kDa protein, chloroplastic (157 aa).

The region spanning 40-155 (GKAGHTHAPM…KPEPKRIAVT (116 aa)) is the sHSP domain.

The protein belongs to the small heat shock protein (HSP20) family.

Its subcellular location is the plastid. It localises to the chloroplast. This chain is Heat shock 22 kDa protein, chloroplastic, found in Chlamydomonas reinhardtii (Chlamydomonas smithii).